The primary structure comprises 531 residues: Probable rhamnogalacturonate lyase A (531 aa).

The N-terminal stretch at 1–20 (MLSKTSLLSLLSLAAGVVNA) is a signal peptide. Cystine bridges form between Cys50-Cys93 and Cys184-Cys193.

This sequence belongs to the polysaccharide lyase 4 family.

It localises to the secreted. It carries out the reaction Endotype eliminative cleavage of L-alpha-rhamnopyranosyl-(1-&gt;4)-alpha-D-galactopyranosyluronic acid bonds of rhamnogalacturonan I domains in ramified hairy regions of pectin leaving L-rhamnopyranose at the reducing end and 4-deoxy-4,5-unsaturated D-galactopyranosyluronic acid at the non-reducing end.. Pectinolytic enzymes consist of four classes of enzymes: pectin lyase, polygalacturonase, pectin methylesterase and rhamnogalacturonase. Degrades the rhamnogalacturonan I (RG-I) backbone of pectin. The chain is Probable rhamnogalacturonate lyase A (rglA) from Aspergillus niger (strain ATCC MYA-4892 / CBS 513.88 / FGSC A1513).